A 156-amino-acid polypeptide reads, in one-letter code: ATP synthase subunit b (156 aa).

Residues Ile-7–Pro-27 form a helical membrane-spanning segment.

Belongs to the ATPase B chain family. As to quaternary structure, F-type ATPases have 2 components, F(1) - the catalytic core - and F(0) - the membrane proton channel. F(1) has five subunits: alpha(3), beta(3), gamma(1), delta(1), epsilon(1). F(0) has three main subunits: a(1), b(2) and c(10-14). The alpha and beta chains form an alternating ring which encloses part of the gamma chain. F(1) is attached to F(0) by a central stalk formed by the gamma and epsilon chains, while a peripheral stalk is formed by the delta and b chains.

The protein localises to the cell inner membrane. Functionally, f(1)F(0) ATP synthase produces ATP from ADP in the presence of a proton or sodium gradient. F-type ATPases consist of two structural domains, F(1) containing the extramembraneous catalytic core and F(0) containing the membrane proton channel, linked together by a central stalk and a peripheral stalk. During catalysis, ATP synthesis in the catalytic domain of F(1) is coupled via a rotary mechanism of the central stalk subunits to proton translocation. Component of the F(0) channel, it forms part of the peripheral stalk, linking F(1) to F(0). In Bordetella petrii (strain ATCC BAA-461 / DSM 12804 / CCUG 43448), this protein is ATP synthase subunit b.